The chain runs to 199 residues: Large ribosomal subunit protein bL25 (199 aa).

This sequence belongs to the bacterial ribosomal protein bL25 family. CTC subfamily. As to quaternary structure, part of the 50S ribosomal subunit; part of the 5S rRNA/L5/L18/L25 subcomplex. Contacts the 5S rRNA. Binds to the 5S rRNA independently of L5 and L18.

In terms of biological role, this is one of the proteins that binds to the 5S RNA in the ribosome where it forms part of the central protuberance. The protein is Large ribosomal subunit protein bL25 of Rickettsia akari (strain Hartford).